The sequence spans 452 residues: Exodeoxyribonuclease 7 large subunit (452 aa).

Belongs to the XseA family. Heterooligomer composed of large and small subunits.

It is found in the cytoplasm. It catalyses the reaction Exonucleolytic cleavage in either 5'- to 3'- or 3'- to 5'-direction to yield nucleoside 5'-phosphates.. In terms of biological role, bidirectionally degrades single-stranded DNA into large acid-insoluble oligonucleotides, which are then degraded further into small acid-soluble oligonucleotides. The protein is Exodeoxyribonuclease 7 large subunit of Bacillus anthracis (strain A0248).